The following is a 134-amino-acid chain: S-protein homolog 31 (134 aa).

Residues 1-21 (MKILSVFLFVFSIYIFGHVSG) form the signal peptide. N-linked (GlcNAc...) asparagine glycosylation is present at Asn-87.

It belongs to the plant self-incompatibility (S1) protein family.

The protein resides in the secreted. The chain is S-protein homolog 31 from Arabidopsis thaliana (Mouse-ear cress).